The sequence spans 249 residues: MGRGRVELKRIENKINRQVTFSKRRNGLLKKAYELSVLCDAEVALIIFSSRGKLYEFGSAGINKTLEKYNSCCYNAQGSNSALAGGEHQSWYQEMSRLKTKLECLQRSQRHMLGEDLGPLSIKELQQLEKQLEYSLSQARQRKTQIMMEQVDDLRRKERQLGELNKQLKNKLEAEADSSNCRSAIQDSWVHGTVVSGGRVLNAQPPPDIDCEPTLQIGYYQFVRPEAANPRSNGGGGDQNNNFVMGWPL.

The MADS-box domain maps to 1 to 61 (MGRGRVELKR…GKLYEFGSAG (61 aa)). In terms of domain architecture, K-box spans 88-178 (HQSWYQEMSR…KNKLEAEADS (91 aa)). A disordered region spans residues 228 to 249 (ANPRSNGGGGDQNNNFVMGWPL).

May interact with the K-box of MADS6. In terms of tissue distribution, expressed in the floral meristem, lodicule, palea, lemma, receptacle, empty glume, stamen, pistil, and ovule.

It is found in the nucleus. Functionally, probable transcription factor. Plays minor but redundant roles with MADS6 in floral development. The protein is MADS-box transcription factor 17 (MADS17) of Oryza sativa subsp. japonica (Rice).